Consider the following 162-residue polypeptide: Protein FAM162B (162 aa).

Positions 26-69 (EATRRPAPALPPRGLPCYSSGGAPSNSGPQGHGEIHRVPTQRRP) are disordered. A helical membrane pass occupies residues 107 to 127 (VKACYIMIGLTIIACFAVIVS).

This sequence belongs to the UPF0389 family.

Its subcellular location is the membrane. In Homo sapiens (Human), this protein is Protein FAM162B (FAM162B).